Consider the following 456-residue polypeptide: Cysteine--tRNA ligase (456 aa).

Residue cysteine 29 participates in Zn(2+) binding. The 'HIGH' region signature appears at 31–41; sequence PTVYDYAHVGN. Positions 209, 234, and 238 each coordinate Zn(2+). The 'KMSKS' region signature appears at 267-271; that stretch reads KMSKS. Lysine 270 contacts ATP.

Belongs to the class-I aminoacyl-tRNA synthetase family. As to quaternary structure, monomer. The cofactor is Zn(2+).

It localises to the cytoplasm. The catalysed reaction is tRNA(Cys) + L-cysteine + ATP = L-cysteinyl-tRNA(Cys) + AMP + diphosphate. This is Cysteine--tRNA ligase from Rhodospirillum centenum (strain ATCC 51521 / SW).